A 509-amino-acid polypeptide reads, in one-letter code: MKRALISVSDKNGIVPFAEKLVELGVEIISTGGTKAAFEQAGVPVTGIEDVTEFPEMLDGRVKTLHPAIHGGLLARRDTAEHMEAIAAHDIKPIDLVVVNLYPFQETIQKSGVTLEEAIENIDIGGPSMLRSAAKNYAAVTVVVDTADYDTVLTELEEHGATTFETRQRLAAKVFRHTAAYDALIAEYLTNITGETFPEKVTLTYNRKQVLRYGENPHQDAAFYTEPGTVENSISSAKQLHGKELSYNNIRDADAALKIASEFTEPVAVAVKHMNPCGVGVGENIEEAYLKAYEADETSIFGGIVALNKEVDAKTAEHMSKIFLEIIIAPSFSEEAFAILAKKKNIRLLTVPFAGSVKGFEKTSVNGGLLIQASDSVIEDTASYEVVTEKQPTEAEMKALIAQWKIVKHVKSNAIVVGSDKQTLGIGAGQMNRIGSALIALEQAGEKAKGAVLASDAFFPMDDTVEAAAKAGITAIIQPGGSIKDKESIEMANKYGISMVLTHVRHFKH.

The 144-residue stretch at 1 to 144 (MKRALISVSD…KNYAAVTVVV (144 aa)) folds into the MGS-like domain.

The protein belongs to the PurH family.

The enzyme catalyses (6R)-10-formyltetrahydrofolate + 5-amino-1-(5-phospho-beta-D-ribosyl)imidazole-4-carboxamide = 5-formamido-1-(5-phospho-D-ribosyl)imidazole-4-carboxamide + (6S)-5,6,7,8-tetrahydrofolate. It catalyses the reaction IMP + H2O = 5-formamido-1-(5-phospho-D-ribosyl)imidazole-4-carboxamide. Its pathway is purine metabolism; IMP biosynthesis via de novo pathway; 5-formamido-1-(5-phospho-D-ribosyl)imidazole-4-carboxamide from 5-amino-1-(5-phospho-D-ribosyl)imidazole-4-carboxamide (10-formyl THF route): step 1/1. The protein operates within purine metabolism; IMP biosynthesis via de novo pathway; IMP from 5-formamido-1-(5-phospho-D-ribosyl)imidazole-4-carboxamide: step 1/1. This chain is Bifunctional purine biosynthesis protein PurH, found in Listeria monocytogenes serotype 4b (strain CLIP80459).